A 171-amino-acid chain; its full sequence is Large ribosomal subunit protein uL10 (171 aa).

It belongs to the universal ribosomal protein uL10 family. Part of the ribosomal stalk of the 50S ribosomal subunit. The N-terminus interacts with L11 and the large rRNA to form the base of the stalk. The C-terminus forms an elongated spine to which L12 dimers bind in a sequential fashion forming a multimeric L10(L12)X complex.

Its function is as follows. Forms part of the ribosomal stalk, playing a central role in the interaction of the ribosome with GTP-bound translation factors. The protein is Large ribosomal subunit protein uL10 of Corynebacterium glutamicum (strain R).